The sequence spans 222 residues: Ribosomal RNA small subunit methyltransferase G (222 aa).

Residues Gly84, Phe89, Val141–Glu142, and Arg154 each bind S-adenosyl-L-methionine.

The protein belongs to the methyltransferase superfamily. RNA methyltransferase RsmG family.

It localises to the cytoplasm. It catalyses the reaction guanosine(527) in 16S rRNA + S-adenosyl-L-methionine = N(7)-methylguanosine(527) in 16S rRNA + S-adenosyl-L-homocysteine. Functionally, specifically methylates the N7 position of guanine in position 527 of 16S rRNA. The sequence is that of Ribosomal RNA small subunit methyltransferase G from Bradyrhizobium sp. (strain BTAi1 / ATCC BAA-1182).